The chain runs to 164 residues: MAFKDNAVELEERVVAINRVTKVVKGGRRLRFAALVVVGDGNGRVGFGTGKAQEVPEAIRKAVEAAKKNMIEVPMVGTTIPHEVYTNFGGAKVLLKPAVEGSGVAAGGAVRAVIELAGVADITSKSLGSNTPINIVRATVEGLKQLKRAEEVAALRGISVSDLA.

The 64-residue stretch at 10-73 (LEERVVAINR…EAAKKNMIEV (64 aa)) folds into the S5 DRBM domain.

It belongs to the universal ribosomal protein uS5 family. In terms of assembly, part of the 30S ribosomal subunit. Contacts proteins S4 and S8.

Functionally, with S4 and S12 plays an important role in translational accuracy. In terms of biological role, located at the back of the 30S subunit body where it stabilizes the conformation of the head with respect to the body. This Streptococcus pyogenes serotype M1 protein is Small ribosomal subunit protein uS5.